The primary structure comprises 276 residues: 2-dehydro-3-deoxyphosphooctonate aldolase (276 aa).

The protein belongs to the KdsA family.

It localises to the cytoplasm. It carries out the reaction D-arabinose 5-phosphate + phosphoenolpyruvate + H2O = 3-deoxy-alpha-D-manno-2-octulosonate-8-phosphate + phosphate. Its pathway is carbohydrate biosynthesis; 3-deoxy-D-manno-octulosonate biosynthesis; 3-deoxy-D-manno-octulosonate from D-ribulose 5-phosphate: step 2/3. It participates in bacterial outer membrane biogenesis; lipopolysaccharide biosynthesis. This chain is 2-dehydro-3-deoxyphosphooctonate aldolase, found in Xanthomonas campestris pv. campestris (strain 8004).